The following is a 296-amino-acid chain: Nucleotide-binding protein SSA_0810 (296 aa).

ATP is bound at residue 13–20 (GMSGAGKT). 63–66 (DMRS) is a binding site for GTP. The segment at 277 to 296 (WPVNSSHRDKNRRKETVNRS) is disordered. Residues 282–296 (SHRDKNRRKETVNRS) are compositionally biased toward basic and acidic residues.

This sequence belongs to the RapZ-like family.

Its function is as follows. Displays ATPase and GTPase activities. This is Nucleotide-binding protein SSA_0810 from Streptococcus sanguinis (strain SK36).